The following is a 98-amino-acid chain: Mu-type opioid receptor (98 aa).

The Cytoplasmic segment spans residues 1–9 (YTKMKTATN). The helical transmembrane segment at 10 to 34 (IYIFNLALADALATSTLPFQSVNYL) threads the bilayer. Topologically, residues 35-45 (MGTWPFGTILC) are extracellular. A helical membrane pass occupies residues 46-68 (KIVISIDYYNMFTSIFTLCTMSV). Residues 69-88 (DRYIAVCHPVKALDFRTPRN) are Cytoplasmic-facing. Tyrosine 71 is subject to Phosphotyrosine. Residues 89–98 (AKTVNVCNWI) traverse the membrane as a helical segment.

It belongs to the G-protein coupled receptor 1 family. Forms homooligomers and heterooligomers with other GPCRs, such as OPRD1, OPRK1, OPRL1, NPFFR2, ADRA2A, SSTR2, CNR1 and CCR5 (probably in dimeric forms). Interacts with heterotrimeric G proteins; interaction with a heterotrimeric complex containing GNAI1, GNB1 and GNG2 stabilizes the active conformation of the receptor and increases its affinity for endomorphin-2, the synthetic opioid peptide DAMGO and for morphinan agonists. Interacts with PPL; the interaction disrupts agonist-mediated G-protein activation. Interacts (via C-terminus) with DNAJB4 (via C-terminus). Interacts with calmodulin; the interaction inhibits the constitutive activity of OPRM1; it abolishes basal and attenuates agonist-stimulated G-protein coupling. Interacts with FLNA, PLD2, RANBP9 and WLS and GPM6A. Interacts with RTP4. Interacts with SYP and GNAS. Interacts with RGS9, RGS17, RGS20, RGS4, PPP1R9B and HINT1. In terms of processing, phosphorylated. Differentially phosphorylated in basal and agonist-induced conditions. Agonist-mediated phosphorylation modulates receptor internalization. Phosphorylated by GRK2 in a agonist-dependent manner. Phosphorylated on tyrosine residues; the phosphorylation is involved in agonist-induced G-protein-independent receptor down-regulation. Phosphorylated. Differentially phosphorylated in basal and agonist-induced conditions. Agonist-mediated phosphorylation modulates receptor internalization. Phosphorylated by GRK2 in a agonist-dependent manner. Phosphorylated on tyrosine residues; the phosphorylation is involved in agonist-induced G-protein-independent receptor down-regulation. Post-translationally, ubiquitinated. A basal ubiquitination seems not to be related to degradation. Ubiquitination is increased upon formation of OPRM1:OPRD1 oligomers leading to proteasomal degradation; the ubiquitination is diminished by RTP4.

Its subcellular location is the cell membrane. The protein localises to the cell projection. It localises to the axon. It is found in the perikaryon. The protein resides in the dendrite. Its subcellular location is the endosome. Its function is as follows. Receptor for endogenous opioids such as beta-endorphin and endomorphin. Receptor for natural and synthetic opioids including morphine, heroin, DAMGO, fentanyl, etorphine, buprenorphin and methadone. Also activated by enkephalin peptides, such as Met-enkephalin or Met-enkephalin-Arg-Phe, with higher affinity for Met-enkephalin-Arg-Phe. Agonist binding to the receptor induces coupling to an inactive GDP-bound heterotrimeric G-protein complex and subsequent exchange of GDP for GTP in the G-protein alpha subunit leading to dissociation of the G-protein complex with the free GTP-bound G-protein alpha and the G-protein beta-gamma dimer activating downstream cellular effectors. The agonist- and cell type-specific activity is predominantly coupled to pertussis toxin-sensitive G(i) and G(o) G alpha proteins, GNAI1, GNAI2, GNAI3 and GNAO1, and to a lesser extent to pertussis toxin-insensitive G alpha proteins GNAZ and GNA15. They mediate an array of downstream cellular responses, including inhibition of adenylate cyclase activity and both N-type and L-type calcium channels, activation of inward rectifying potassium channels, mitogen-activated protein kinase (MAPK), phospholipase C (PLC), phosphoinositide/protein kinase (PKC), phosphoinositide 3-kinase (PI3K) and regulation of NF-kappa-B. Also couples to adenylate cyclase stimulatory G alpha proteins. The selective temporal coupling to G-proteins and subsequent signaling can be regulated by RGSZ proteins, such as RGS9, RGS17 and RGS4. Phosphorylation by members of the GPRK subfamily of Ser/Thr protein kinases and association with beta-arrestins is involved in short-term receptor desensitization. Beta-arrestins associate with the GPRK-phosphorylated receptor and uncouple it from the G-protein thus terminating signal transduction. The phosphorylated receptor is internalized through endocytosis via clathrin-coated pits which involves beta-arrestins. The activation of the ERK pathway occurs either in a G-protein-dependent or a beta-arrestin-dependent manner and is regulated by agonist-specific receptor phosphorylation. Acts as a class A G-protein coupled receptor (GPCR) which dissociates from beta-arrestin at or near the plasma membrane and undergoes rapid recycling. Receptor down-regulation pathways are varying with the agonist and occur dependent or independent of G-protein coupling. Endogenous ligands induce rapid desensitization, endocytosis and recycling. Heterooligomerization with other GPCRs can modulate agonist binding, signaling and trafficking properties. Involved in neurogenesis. The polypeptide is Mu-type opioid receptor (OPRM1) (Cavia porcellus (Guinea pig)).